Reading from the N-terminus, the 257-residue chain is MEFPDLGAHCSEPSCQRLDFLPLKCDACSGIFCADHVAYAQHHCGSAYQKDIQVPVCPLCNVPVPVARGEPPDRAVGEHIDRDCRSDPAQQKRKIFTNKCERSGCRQREMMKLTCDRCGRNFCIKHRHPLDHECSGEGHQTSRAGLAAISRAQGLASTSTAPSPSRTLPSSSSPSRATPQLPTRTASPVIALQNGLSEDEALQRALELSLAEAKPQVLSSQEEDDLALAQALSASEAEYQQQQAQSRSLKPSNCSLC.

2 consecutive AN1-type zinc fingers follow at residues 4–52 (PDLG…QKDI) and 94–142 (KIFT…HQTS). 16 residues coordinate Zn(2+): Cys10, Cys15, Cys25, Cys28, Cys33, His36, His42, Cys44, Cys100, Cys105, Cys115, Cys118, Cys123, His126, His132, and Cys134. Residues 141 to 151 (TSRAGLAAISR) form a VCP/p97-interacting motif (VIM) region. The segment at 152 to 184 (AQGLASTSTAPSPSRTLPSSSSPSRATPQLPTR) is disordered. The segment covering 155–179 (LASTSTAPSPSRTLPSSSSPSRATP) has biased composition (low complexity). Phosphoserine; by MAPK14 is present on residues Ser163, Ser173, and Ser187. 2 consecutive UIM domains span residues 197–216 (SEDE…AKPQ) and 221–240 (QEED…AEYQ). A Cysteine methyl ester modification is found at Cys254. Cys254 carries S-geranylgeranyl cysteine lipidation. The CAAX motif signature appears at 254–257 (CSLC). Residues 255 to 257 (SLC) constitute a propeptide, removed in mature form.

As to quaternary structure, binds 'Lys-48'-linked polyubiquitin chains of ubiquitinated proteins. Associates with the proteasome complex; upon exposure to arsenite. Interacts (via VIM motif) with VCP; the interaction is direct. Interacts with BAG6. Interacts with IGF1R (nascent precursor form). Interacts with DERL1, FAF2, NPLOC4 and UFD1; probably through VCP. In terms of processing, phosphorylated by MAPK14. Phosphorylation has no effect on association with the proteasome complex.

It is found in the endoplasmic reticulum membrane. Its function is as follows. Plays a role in protein homeostasis by regulating both the translocation and the ubiquitin-mediated proteasomal degradation of nascent proteins at the endoplasmic reticulum. It is involved in the regulation of signal-mediated translocation of proteins into the endoplasmic reticulum. It also plays a role in the ubiquitin-mediated proteasomal degradation of proteins for which signal-mediated translocation to the endoplasmic reticulum has failed. May therefore function in the endoplasmic reticulum stress-induced pre-emptive quality control, a mechanism that selectively attenuates the translocation of newly synthesized proteins into the endoplasmic reticulum and reroutes them to the cytosol for proteasomal degradation. By controlling the steady-state expression of the IGF1R receptor, indirectly regulates the insulin-like growth factor receptor signaling pathway. The polypeptide is AN1-type zinc finger protein 2B (Mus musculus (Mouse)).